The chain runs to 181 residues: Large ribosomal subunit protein uL6 (181 aa).

It belongs to the universal ribosomal protein uL6 family. Part of the 50S ribosomal subunit.

Its function is as follows. This protein binds to the 23S rRNA, and is important in its secondary structure. It is located near the subunit interface in the base of the L7/L12 stalk, and near the tRNA binding site of the peptidyltransferase center. This chain is Large ribosomal subunit protein uL6, found in Lawsonia intracellularis (strain PHE/MN1-00).